The following is a 559-amino-acid chain: Formate--tetrahydrofolate ligase (559 aa).

68–75 (TPAGEGKS) is a binding site for ATP.

Belongs to the formate--tetrahydrofolate ligase family.

It carries out the reaction (6S)-5,6,7,8-tetrahydrofolate + formate + ATP = (6R)-10-formyltetrahydrofolate + ADP + phosphate. It functions in the pathway one-carbon metabolism; tetrahydrofolate interconversion. The protein is Formate--tetrahydrofolate ligase of Bacillus licheniformis (strain ATCC 14580 / DSM 13 / JCM 2505 / CCUG 7422 / NBRC 12200 / NCIMB 9375 / NCTC 10341 / NRRL NRS-1264 / Gibson 46).